The chain runs to 529 residues: Ectonucleoside triphosphate diphosphohydrolase 3 (529 aa).

Residues 1–22 are Cytoplasmic-facing; that stretch reads MFTVMTRQPCEQAGFRALSRTP. The chain crosses the membrane as a helical span at residues 23 to 43; it reads AIVTLVVLLVSIVVLVTLTLI. At 44–485 the chain is on the extracellular side; the sequence is QIRHPQVLPP…PLIHLPIQPP (442 aa). Residue asparagine 81 is glycosylated (N-linked (GlcNAc...) asparagine). A disulfide bridge links cysteine 92 with cysteine 116. N-linked (GlcNAc...) asparagine glycosylation occurs at asparagine 149. Glutamate 182 serves as the catalytic Proton acceptor. 222 to 226 is an ATP binding site; that stretch reads GASTQ. N-linked (GlcNAc...) asparagine glycans are attached at residues asparagine 238, asparagine 284, and asparagine 318. Cystine bridges form between cysteine 261/cysteine 308, cysteine 289/cysteine 334, and cysteine 347/cysteine 353. 2 N-linked (GlcNAc...) asparagine glycosylation sites follow: asparagine 381 and asparagine 392. Cysteine 399 and cysteine 422 are joined by a disulfide. N-linked (GlcNAc...) asparagine glycosylation is present at asparagine 454. Residues 486–506 traverse the membrane as a helical segment; it reads VFMGVLAFFTAIALLCLAFLL. Topologically, residues 507-529 are cytoplasmic; that stretch reads YLCSSFRTKERSENAFDQAVDSD.

The protein belongs to the GDA1/CD39 NTPase family. Requires Ca(2+) as cofactor. Mg(2+) is required as a cofactor.

Its subcellular location is the cell membrane. The catalysed reaction is a ribonucleoside 5'-triphosphate + 2 H2O = a ribonucleoside 5'-phosphate + 2 phosphate + 2 H(+). Functionally, catalyzes the hydrolysis of nucleoside triphosphates and diphosphates. Has a threefold preference for the hydrolysis of ATP and UTP over ADP and UDP. This is Ectonucleoside triphosphate diphosphohydrolase 3 from Mus musculus (Mouse).